The chain runs to 434 residues: Na(+)/H(+) antiporter NhaA 1 (434 aa).

A compositionally biased stretch (pro residues) spans 1–15 (MISPNPALPTPPHAP). The tract at residues 1–21 (MISPNPALPTPPHAPTAPGRG) is disordered. 12 helical membrane passes run 34–54 (GGIL…SPAA), 74–94 (LSVS…VVGL), 112–132 (ALPI…FTLI), 143–163 (GWAI…AVVG), 173–193 (FLLT…AVFY), 196–216 (GIAF…GILV), 222–242 (AWYV…ASGI), 245–265 (TIAG…RAGV), 294–314 (IAVP…LEGL), 326–346 (IIVA…LLVA), 362–382 (VLGL…VGEL), and 393–413 (AVKV…GTLL).

This sequence belongs to the NhaA Na(+)/H(+) (TC 2.A.33) antiporter family.

It localises to the cell membrane. It catalyses the reaction Na(+)(in) + 2 H(+)(out) = Na(+)(out) + 2 H(+)(in). In terms of biological role, na(+)/H(+) antiporter that extrudes sodium in exchange for external protons. This Clavibacter michiganensis subsp. michiganensis (strain NCPPB 382) protein is Na(+)/H(+) antiporter NhaA 1.